The primary structure comprises 233 residues: Adapter protein MecA (233 aa).

The protein belongs to the MecA family. As to quaternary structure, homodimer.

Enables the recognition and targeting of unfolded and aggregated proteins to the ClpC protease or to other proteins involved in proteolysis. In Lactococcus lactis subsp. lactis (strain IL1403) (Streptococcus lactis), this protein is Adapter protein MecA.